Here is a 588-residue protein sequence, read N- to C-terminus: Phosphatidylinositol-3,5-bisphosphate 3-phosphatase mtm-1 (588 aa).

The region spanning 20-91 (IQESIDLKLL…GQVSRIEKVG (72 aa)) is the GRAM domain. Positions 164 to 543 (GWKIYSAEKE…CGLHVWIDYY (380 aa)) constitute a Myotubularin phosphatase domain. Positions 293, 316, and 317 each coordinate a 1,2-diacyl-sn-glycero-3-phospho-(1D-myo-inositol-3,5-bisphosphate). A 1,2-diacyl-sn-glycero-3-phospho-(1D-myo-inositol-3-phosphate)-binding residues include asparagine 293, asparagine 316, and isoleucine 317. Residue cysteine 378 is the Phosphocysteine intermediate of the active site. Positions 379, 380, 381, 382, 383, 384, 420, and 424 each coordinate a 1,2-diacyl-sn-glycero-3-phospho-(1D-myo-inositol-3,5-bisphosphate). Residues serine 379, aspartate 380, glycine 381, tryptophan 382, aspartate 383, and arginine 384 each contribute to the a 1,2-diacyl-sn-glycero-3-phospho-(1D-myo-inositol-3-phosphate) site. Serine 379 contacts phosphate. Positions 381, 382, 383, and 384 each coordinate phosphate. Residue arginine 424 coordinates a 1,2-diacyl-sn-glycero-3-phospho-(1D-myo-inositol-3-phosphate). Positions 563 to 588 (AQFVDEKKQLLDEIMALDDAAQKLTA) form a coiled coil.

Belongs to the protein-tyrosine phosphatase family. Non-receptor class myotubularin subfamily. In terms of tissue distribution, expressed in embryo, larva and in adults. Expressed in a few head and tail neurons. Expressed in hypodermis, body wall and pharyngeal muscles, sheath cells, vulva, distal tip cells and coelomocytes.

The protein localises to the cell membrane. Its subcellular location is the cell projection. It localises to the phagocytic cup. It is found in the apical cell membrane. The protein resides in the cytoplasmic granule membrane. It carries out the reaction a 1,2-diacyl-sn-glycero-3-phospho-(1D-myo-inositol-3,5-bisphosphate) + H2O = a 1,2-diacyl-sn-glycero-3-phospho-(1D-myo-inositol-5-phosphate) + phosphate. The catalysed reaction is a 1,2-diacyl-sn-glycero-3-phospho-(1D-myo-inositol-3-phosphate) + H2O = a 1,2-diacyl-sn-glycero-3-phospho-(1D-myo-inositol) + phosphate. The enzyme catalyses 1,2-dioctanoyl-sn-glycero-3-phospho-(1-D-myo-inositol-3-phosphate) + H2O = 1,2-dioctanoyl-sn-glycero-3-phospho-(1D-myo-inositol) + phosphate. In terms of biological role, lipid phosphatase that specifically dephosphorylates phosphatidylinositol 3-phosphate (PI3P) and phosphatidylinositol 3,5-bisphosphate (PI(3,5)P2). Negatively regulates accumulation of PI3P on intracellular vesicles. Negatively regulates phagocytosis of apoptotic cells probably by limiting the recruitment and/or the activation of ced-5, ced-2 and ced-12 complex. In addition, may positively regulate phagosome maturation by promoting recycling of apoptotic receptor ced-1 back to the plasma membrane. Essential for embryonic and larval development. May promote migration of distal tip cells. This chain is Phosphatidylinositol-3,5-bisphosphate 3-phosphatase mtm-1, found in Caenorhabditis elegans.